We begin with the raw amino-acid sequence, 149 residues long: Transcriptional repressor NrdR (149 aa).

Residues 3–34 fold into a zinc finger; that stretch reads CPFCTAVDTKVIDSRLVGDGSQVRRRRQCLVC. Positions 49–139 constitute an ATP-cone domain; it reads PRVVKSDEIR…VYRSFEDVRD (91 aa).

The protein belongs to the NrdR family. Zn(2+) serves as cofactor.

In terms of biological role, negatively regulates transcription of bacterial ribonucleotide reductase nrd genes and operons by binding to NrdR-boxes. The sequence is that of Transcriptional repressor NrdR from Proteus mirabilis (strain HI4320).